The sequence spans 609 residues: UvrABC system protein C (609 aa).

Positions 16 to 94 (HLPGVYRHLD…IKSLRPRYNI (79 aa)) constitute a GIY-YIG domain. The UVR domain occupies 203-238 (REVMDEIEARMLQASTELRFEEAAVLRDQMGSLSKV).

It belongs to the UvrC family. In terms of assembly, interacts with UvrB in an incision complex.

It is found in the cytoplasm. In terms of biological role, the UvrABC repair system catalyzes the recognition and processing of DNA lesions. UvrC both incises the 5' and 3' sides of the lesion. The N-terminal half is responsible for the 3' incision and the C-terminal half is responsible for the 5' incision. The polypeptide is UvrABC system protein C (Bordetella pertussis (strain Tohama I / ATCC BAA-589 / NCTC 13251)).